A 467-amino-acid chain; its full sequence is MFFSGLISKLHVHGTKRTNHFTIFHRLNHFVTTSSSSVTPLSPQDRNKLLATLLSNCTSLARVRRIHGDIFRSRILDQYPIAFLWNNIMRSYIRHESPLDAIQVYLGMVRSTVLPDRYSLPIVIKAAVQIHDFTLGKELHSVAVRLGFVGDEFCESGFITLYCKAGEFENARKVFDENPERKLGSWNAIIGGLNHAGRANEAVEMFVDMKRSGLEPDDFTMVSVTASCGGLGDLSLAFQLHKCVLQAKTEEKSDIMMLNSLIDMYGKCGRMDLASHIFEEMRQRNVVSWSSMIVGYAANGNTLEALECFRQMREFGVRPNKITFVGVLSACVHGGLVEEGKTYFAMMKSEFELEPGLSHYGCIVDLLSRDGQLKEAKKVVEEMPMKPNVMVWGCLMGGCEKFGDVEMAEWVAPYMVELEPWNDGVYVVLANVYALRGMWKDVERVRKLMKTKKVAKIPAYSYASTTF.

The N-terminal 30 residues, Met-1–Phe-30, are a transit peptide targeting the mitochondrion. 9 PPR repeats span residues Ile-81–Pro-115, Asp-116–Gly-150, Asp-151–Arg-181, Lys-182–Pro-216, Asp-217–Glu-251, Asp-254–Arg-284, Asn-285–Pro-319, Asn-320–Glu-350, and Gly-356–Lys-386. Positions Val-391 to Thr-466 are type E motif.

This sequence belongs to the PPR family. PCMP-E subfamily.

It localises to the mitochondrion. The protein is Pentatricopeptide repeat-containing protein At1g77170, mitochondrial (PCMP-E21) of Arabidopsis thaliana (Mouse-ear cress).